A 475-amino-acid chain; its full sequence is MAAKSQPSAPKTKSTSGLTNGNAAAQGQWGRAWEVDWFSLASVIFLLLFAPFIVYYFIMACDQYGCSLTVPVADLATGRARLADIWARTPPVTAKAAQIYTAWVTLQVLLYMLLPDFCHKFLPGYVGGVQEGAVTPAGAVNKYEINGLQAWLLTHLLWFANAHLLGWFSPTIIFDNWIPLLWCANILGYTVSTFAMVKGYLFPTDARECKFTGNFFYNYMMGVEFNPRIGKWFDFKLFFNGRPGIVAWTLINLSFAAKQQELYGHVTNSMVLVNILQAIYVLDFFWNETWYLKTIDICHDHFGWYLGWGDCVWLPYLYTLQGLYLVYHPVQLPTYYALGVLLLGLLGYYIFRMTNHQKDLFRRTDGRCLIWGRKPKAIECSYTSADGQRHHSKLLVSGFWGVARHFNYTGDLMGSLAYCLACGGGHLLPYFYIIFMAILLTHRCLRDEHRCANKYGRDWEHYTAAVPYRLLPGIF.

A disordered region spans residues 1–21; sequence MAAKSQPSAPKTKSTSGLTNG. S14 is subject to Phosphoserine. 6 consecutive transmembrane segments (helical) span residues 40-60, 151-173, 178-200, 266-286, 306-326, and 331-351; these read LASV…FIMA, WLLT…PTII, IPLL…VKGY, VTNS…DFFW, LGWG…LYLV, and QLPT…YYIF. Residues K358, R362, L395, W400, and 407–408 contribute to the NADP(+) site; that span reads NY. A helical transmembrane segment spans residues 420-440; sequence LACGGGHLLPYFYIIFMAILL. Residues D447, 451-455, and Y462 each bind NADP(+); that span reads CANKY.

Belongs to the ERG4/ERG24 family. As to quaternary structure, interacts with DHCR24; this interaction regulates DHCR7 activity. Interacts with TMEM147.

The protein localises to the endoplasmic reticulum membrane. The catalysed reaction is cholesterol + NADP(+) = 7-dehydrocholesterol + NADPH + H(+). It catalyses the reaction 7-dehydrodesmosterol + NADPH + H(+) = desmosterol + NADP(+). It carries out the reaction 5,6alpha-epoxy-5alpha-cholestan-3beta-ol + H2O = 5alpha-cholestane-3beta,5,6beta-triol. The enzyme catalyses 5,6beta-epoxy-5beta-cholestan-3beta-ol + H2O = 5alpha-cholestane-3beta,5,6beta-triol. The protein operates within steroid biosynthesis; cholesterol biosynthesis. Functionally, oxidoreductase that catalyzes the last step of the cholesterol synthesis pathway, which transforms cholesta-5,7-dien-3beta-ol (7-dehydrocholesterol,7-DHC) into cholesterol by reducing the C7-C8 double bond of its sterol core. Can also metabolize cholesta-5,7,24-trien-3beta-ol (7-dehydrodemosterol, 7-DHD) to desmosterol, which is then metabolized by the Delta(24)-sterol reductase (DHCR24) to cholesterol. Modulates ferroptosis (a form of regulated cell death driven by iron-dependent lipid peroxidation) through the metabolic breakdown of the anti-ferroptotic metabolites 7-DHC and 7-DHD which, when accumulated, divert the propagation of peroxyl radical-mediated damage from phospholipid components to its sterol core, protecting plasma and mitochondrial membranes from phospholipid autoxidation. Its function is as follows. Component of the microsomal antiestrogen binding site (AEBS), a multiproteic complex at the ER membrane that consists of an association between cholestenol Delta-isomerase/EBP and DHCR7. This complex is responsible for cholesterol-5,6-epoxide hydrolase (ChEH) activity, which consists in the hydration of cholesterol-5,6-epoxides (5,6-EC) into cholestane-3beta,5alpha,6beta-triol (CT). The precise role of each component of this complex has not been described yet. The protein is 7-dehydrocholesterol reductase (DHCR7) of Bos taurus (Bovine).